We begin with the raw amino-acid sequence, 128 residues long: Small ribosomal subunit protein uS14m (128 aa).

This sequence belongs to the universal ribosomal protein uS14 family. As to quaternary structure, component of the mitochondrial ribosome small subunit (28S) which comprises a 12S rRNA and about 30 distinct proteins. Interacts with LIAT1.

Its subcellular location is the mitochondrion. This chain is Small ribosomal subunit protein uS14m (Mrps14), found in Mus musculus (Mouse).